Reading from the N-terminus, the 734-residue chain is Photosystem I P700 chlorophyll a apoprotein A2 (734 aa).

8 helical membrane-spanning segments follow: residues 46–69, 135–158, 175–199, 273–291, 330–353, 369–395, 417–439, and 517–535; these read IFAS…FHVA, LYTG…LHLQ, LNHH…HVAI, MAHH…GHMY, IHFQ…QHMY, AALY…IFFI, AIIS…LYVH, and FLVH…LILV. Positions 559 and 568 each coordinate [4Fe-4S] cluster. The next 2 helical transmembrane spans lie at 575-596 and 643-665; these read AFYL…YWHW and LSVW…MFLI. Histidine 654, methionine 662, and tyrosine 670 together coordinate chlorophyll a. Tryptophan 671 contacts phylloquinone. A helical membrane pass occupies residues 707 to 727; sequence LVGLAHFSVGYIFTYAAFLIA.

This sequence belongs to the PsaA/PsaB family. The PsaA/B heterodimer binds the P700 chlorophyll special pair and subsequent electron acceptors. PSI consists of a core antenna complex that captures photons, and an electron transfer chain that converts photonic excitation into a charge separation. The eukaryotic PSI reaction center is composed of at least 11 subunits. Requires P700 is a chlorophyll a/chlorophyll a' dimer, A0 is one or more chlorophyll a, A1 is one or both phylloquinones and FX is a shared 4Fe-4S iron-sulfur center. as cofactor.

Its subcellular location is the plastid. It is found in the chloroplast thylakoid membrane. The catalysed reaction is reduced [plastocyanin] + hnu + oxidized [2Fe-2S]-[ferredoxin] = oxidized [plastocyanin] + reduced [2Fe-2S]-[ferredoxin]. PsaA and PsaB bind P700, the primary electron donor of photosystem I (PSI), as well as the electron acceptors A0, A1 and FX. PSI is a plastocyanin-ferredoxin oxidoreductase, converting photonic excitation into a charge separation, which transfers an electron from the donor P700 chlorophyll pair to the spectroscopically characterized acceptors A0, A1, FX, FA and FB in turn. Oxidized P700 is reduced on the lumenal side of the thylakoid membrane by plastocyanin. The polypeptide is Photosystem I P700 chlorophyll a apoprotein A2 (Helianthus annuus (Common sunflower)).